A 183-amino-acid chain; its full sequence is Glutamyl-tRNA(Gln) amidotransferase subunit F, mitochondrial (183 aa).

Residues 1–23 constitute a mitochondrion transit peptide; the sequence is MSRMLNQIPRLITRSFRTSSVGY.

This sequence belongs to the GatF family. As to quaternary structure, subunit of the heterotrimeric GatFAB amidotransferase (AdT) complex, composed of A, B and F subunits.

The protein resides in the mitochondrion inner membrane. It catalyses the reaction L-glutamyl-tRNA(Gln) + L-glutamine + ATP + H2O = L-glutaminyl-tRNA(Gln) + L-glutamate + ADP + phosphate + H(+). Its function is as follows. Allows the formation of correctly charged Gln-tRNA(Gln) through the transamidation of misacylated Glu-tRNA(Gln) in the mitochondria. The reaction takes place in the presence of glutamine and ATP through an activated gamma-phospho-Glu-tRNA(Gln). Required for proper protein synthesis within the mitochondrion. The chain is Glutamyl-tRNA(Gln) amidotransferase subunit F, mitochondrial from Debaryomyces hansenii (strain ATCC 36239 / CBS 767 / BCRC 21394 / JCM 1990 / NBRC 0083 / IGC 2968) (Yeast).